A 227-amino-acid polypeptide reads, in one-letter code: Germin-like protein 3-3 (227 aa).

The first 26 residues, 1–26, serve as a signal peptide directing secretion; it reads MECFKTTLAGVVLVVLLLQQAPVLRA. Cys36 and Cys51 are joined by a disulfide. The Cupin type-1 domain occupies 65–217; the sequence is SRLATGGDVN…ALRVDAGVVE (153 aa). 2 N-linked (GlcNAc...) asparagine glycosylation sites follow: Asn78 and Asn81. Residues His114, His116, Glu121, and His163 each coordinate Mn(2+).

Belongs to the germin family. Oligomer (believed to be a pentamer but probably hexamer).

The protein resides in the secreted. It is found in the extracellular space. The protein localises to the apoplast. In terms of biological role, may play a role in plant defense. Probably has no oxalate oxidase activity even if the active site is conserved. The sequence is that of Germin-like protein 3-3 from Oryza sativa subsp. japonica (Rice).